A 427-amino-acid polypeptide reads, in one-letter code: Flotillin-1 (427 aa).

3 positions are modified to phosphoserine: Ser-19, Ser-163, and Ser-385. Thr-387 bears the Phosphothreonine mark.

It belongs to the band 7/mec-2 family. Flotillin subfamily. As to quaternary structure, heterooligomeric complex of flotillin-1 and flotillin-2 and caveolin-1 and caveolin-2. Interacts with ECPAS.

It localises to the cell membrane. The protein resides in the endosome. Its subcellular location is the membrane. The protein localises to the caveola. It is found in the melanosome. It localises to the membrane raft. Its function is as follows. May act as a scaffolding protein within caveolar membranes, functionally participating in formation of caveolae or caveolae-like vesicles. In Homo sapiens (Human), this protein is Flotillin-1 (FLOT1).